Reading from the N-terminus, the 386-residue chain is Mannitol-1-phosphate 5-dehydrogenase (386 aa).

An NAD(+)-binding site is contributed by 4 to 15 (AVHFGAGNIGRG).

This sequence belongs to the mannitol dehydrogenase family.

It carries out the reaction D-mannitol 1-phosphate + NAD(+) = beta-D-fructose 6-phosphate + NADH + H(+). In Oceanobacillus iheyensis (strain DSM 14371 / CIP 107618 / JCM 11309 / KCTC 3954 / HTE831), this protein is Mannitol-1-phosphate 5-dehydrogenase.